A 182-amino-acid chain; its full sequence is MDERRLIRVSKYLSKHLRHQPERLGLTLEPGGWVGVEQLLAACAANNVAISLAELHEVVEQNNKQRFGFDPTGQKIRAHQGHSVTVDLGLVAQQPPIILYHGTAKHNLAIILRDGLRPMQRQHVHLSRDRATALQVGARHGQAVILIVQADELFQAGQAFFCSDNGVWLTTAIDPAYLALER.

The protein belongs to the KptA/TPT1 family.

Its function is as follows. Removes the 2'-phosphate from RNA via an intermediate in which the phosphate is ADP-ribosylated by NAD followed by a presumed transesterification to release the RNA and generate ADP-ribose 1''-2''-cyclic phosphate (APPR&gt;P). May function as an ADP-ribosylase. This chain is Probable RNA 2'-phosphotransferase, found in Herpetosiphon aurantiacus (strain ATCC 23779 / DSM 785 / 114-95).